The chain runs to 390 residues: Digeranylgeranylglycerophospholipid reductase (390 aa).

Residues alanine 18, glutamate 37, cysteine 48, alanine 49, alanine 51, arginine 98, valine 122, aspartate 278, glycine 290, and isoleucine 291 each coordinate FAD. A 2,3-bis-O-(geranylgeranyl)-sn-glycerol 1-phospholipid is bound at residue valine 368.

Belongs to the geranylgeranyl reductase family. DGGGPL reductase subfamily. It depends on FAD as a cofactor.

The enzyme catalyses a 2,3-bis-O-phytanyl-sn-glycerol 1-phospholipid + 8 A = a 2,3-bis-O-(geranylgeranyl)-sn-glycerol 1-phospholipid + 8 AH2. It carries out the reaction 2,3-bis-O-(phytanyl)-sn-glycerol 1-phosphate + 8 A = 2,3-bis-O-(geranylgeranyl)-sn-glycerol 1-phosphate + 8 AH2. The catalysed reaction is CDP-2,3-bis-O-(geranylgeranyl)-sn-glycerol + 8 AH2 = CDP-2,3-bis-O-(phytanyl)-sn-glycerol + 8 A. It catalyses the reaction archaetidylserine + 8 AH2 = 2,3-bis-O-phytanyl-sn-glycero-3-phospho-L-serine + 8 A. The protein operates within membrane lipid metabolism; glycerophospholipid metabolism. In terms of biological role, is involved in the reduction of 2,3-digeranylgeranylglycerophospholipids (unsaturated archaeols) into 2,3-diphytanylglycerophospholipids (saturated archaeols) in the biosynthesis of archaeal membrane lipids. Catalyzes the formation of archaetidic acid (2,3-di-O-phytanyl-sn-glyceryl phosphate) from 2,3-di-O-geranylgeranylglyceryl phosphate (DGGGP) via the hydrogenation of each double bond of the isoprenoid chains. Is also probably able to reduce double bonds of geranyl groups in CDP-2,3-bis-O-(geranylgeranyl)-sn-glycerol and archaetidylserine, thus acting at various stages in the biosynthesis of archaeal membrane lipids. The polypeptide is Digeranylgeranylglycerophospholipid reductase (Methanococcus maripaludis (strain C7 / ATCC BAA-1331)).